Reading from the N-terminus, the 389-residue chain is Na(+)/H(+) antiporter NhaA 1 (389 aa).

Helical transmembrane passes span 12 to 32, 62 to 82, 97 to 117, 128 to 148, 157 to 177, 184 to 204, 220 to 240, 260 to 280, 282 to 302, 331 to 351, and 365 to 385; these read VLNE…ALLV, FLLW…GLEL, IVLP…LFAL, GWAI…MMCG, IFLL…IAIF, IAAF…NLLG, ISVL…AFFI, FWIA…VNLS, IDIG…LFVG, LYGV…IDGL, and LAIL…LKFF.

The protein belongs to the NhaA Na(+)/H(+) (TC 2.A.33) antiporter family.

The protein resides in the cell inner membrane. It carries out the reaction Na(+)(in) + 2 H(+)(out) = Na(+)(out) + 2 H(+)(in). Na(+)/H(+) antiporter that extrudes sodium in exchange for external protons. The sequence is that of Na(+)/H(+) antiporter NhaA 1 from Campylobacter jejuni subsp. jejuni serotype O:2 (strain ATCC 700819 / NCTC 11168).